A 78-amino-acid chain; its full sequence is Small ribosomal subunit protein uS15 (78 aa).

The protein belongs to the universal ribosomal protein uS15 family. Part of the 30S ribosomal subunit. Forms a bridge to the 50S subunit in the 70S ribosome, contacting the 23S rRNA.

Functionally, one of the primary rRNA binding proteins, it binds directly to 16S rRNA where it helps nucleate assembly of the platform of the 30S subunit by binding and bridging several RNA helices of the 16S rRNA. Forms an intersubunit bridge (bridge B4) with the 23S rRNA of the 50S subunit in the ribosome. This chain is Small ribosomal subunit protein uS15, found in Karelsulcia muelleri (strain GWSS) (Sulcia muelleri).